Reading from the N-terminus, the 293-residue chain is MMRIALFLLTNLAVMVVFGLVLSLTGIQSSSVQGLMIMALLFGFGGSFVSLLMSKWMALRSVGGEVIEQPRNERERWLVNTVATQARQAGIAMPQVAIYHAPDINAFATGARRDASLVAVSTGLLQNMSPDEAEAVIAHEISHIANGDMVTMTLIQGVVNTFVIFISRILAQLAAGFMGGNRDEGEESNGNPLIYFAVATVLELVFGILASIITMWFSRHREFHADAGSAKLVGREKMIAALQRLKTSYEPQEATSMMALCINGKSKSLSELFMTHPPLDKRIEALRTGEYLK.

Topologically, residues 1–3 (MMR) are cytoplasmic. A helical membrane pass occupies residues 4–24 (IALFLLTNLAVMVVFGLVLSL). Topologically, residues 25–33 (TGIQSSSVQ) are periplasmic. The chain crosses the membrane as a helical span at residues 34-54 (GLMIMALLFGFGGSFVSLLMS). Residues 55-293 (KWMALRSVGG…EALRTGEYLK (239 aa)) lie on the Cytoplasmic side of the membrane. A Zn(2+)-binding site is contributed by His139. Glu140 is a catalytic residue. Zn(2+) is bound by residues His143 and Glu222.

This sequence belongs to the peptidase M48B family. The cofactor is Zn(2+). Undergoes self-cleavage. This may not be physiological.

The protein resides in the cell inner membrane. Its function is as follows. Membrane-localized protease able to endoproteolytically degrade overproduced SecY but not YccA, another membrane protein. It seems to cleave SecY at specific cytoplasmic sites. Does not require ATP. Its natural substrate has not been identified. Probably plays a role in the quality control of integral membrane proteins. The sequence is that of Protease HtpX (htpX) from Escherichia coli (strain K12).